Here is an 862-residue protein sequence, read N- to C-terminus: Rab GTPase-binding effector protein 1 (862 aa).

Alanine 2 is modified (N-acetylalanine). A coiled-coil region spans residues 11-345; sequence DVSLQQRVAE…KKADVEEEIK (335 aa). Lysine 282 carries the post-translational modification N6-acetyllysine. A disordered region spans residues 315–338; the sequence is ELKKKDQEDDEQQRLNKRKDHKKA. Serine 374, serine 377, and serine 407 each carry phosphoserine. A Phosphothreonine modification is found at threonine 408. Serine 410 carries the post-translational modification Phosphoserine. Positions 435-447 are interaction with AP1G1, AP1G2, GGA1, GGA2 and GGA3; sequence DESDFGPLVGADS. Positions 534-816 form a coiled coil; sequence DMCSNYEKQL…LQTELDVSEQ (283 aa).

It belongs to the rabaptin family. Homodimer when bound to RAB5A. Heterodimer with RABGEF1. The heterodimer binds RAB4A and RAB5A that have been activated by GTP-binding. Interacts with TSC2. Interacts with GGA1 (via GAE domain), GGA2 (via GAE domain) and GGA3 (via GAE domain). Interacts with AP1G1 (via GAE domain). Interacts with AP1G2 (via GAE domain). Interacts with ECPAS. Interacts with KCNH1. Interacts with PKD1 (via C-terminal domain) and GGA1; the interactions recruit PKD1:PKD2 complex to GGA1 and ARL3 at trans-Golgi network. In terms of processing, proteolytic cleavage by caspases in apoptotic cells causes loss of endosome fusion activity.

It localises to the cytoplasm. Its subcellular location is the early endosome. The protein resides in the recycling endosome. The protein localises to the cytoplasmic vesicle. Rab effector protein acting as linker between gamma-adaptin, RAB4A and RAB5A. Involved in endocytic membrane fusion and membrane trafficking of recycling endosomes. Involved in KCNH1 channels trafficking to and from the cell membrane. Stimulates RABGEF1 mediated nucleotide exchange on RAB5A. Mediates the traffic of PKD1:PKD2 complex from the endoplasmic reticulum through the Golgi to the cilium. This Homo sapiens (Human) protein is Rab GTPase-binding effector protein 1 (RABEP1).